A 425-amino-acid chain; its full sequence is Tol-Pal system protein TolB (425 aa).

Positions 1-25 (MTRKHILSFALMTALGMTVTSTAFA) are cleaved as a signal peptide.

The protein belongs to the TolB family. As to quaternary structure, the Tol-Pal system is composed of five core proteins: the inner membrane proteins TolA, TolQ and TolR, the periplasmic protein TolB and the outer membrane protein Pal. They form a network linking the inner and outer membranes and the peptidoglycan layer.

It is found in the periplasm. Its function is as follows. Part of the Tol-Pal system, which plays a role in outer membrane invagination during cell division and is important for maintaining outer membrane integrity. This chain is Tol-Pal system protein TolB, found in Acinetobacter baylyi (strain ATCC 33305 / BD413 / ADP1).